The following is a 303-amino-acid chain: Coenzyme PQQ synthesis protein B (303 aa).

It belongs to the PqqB family.

It participates in cofactor biosynthesis; pyrroloquinoline quinone biosynthesis. May be involved in the transport of PQQ or its precursor to the periplasm. The polypeptide is Coenzyme PQQ synthesis protein B (Acinetobacter baumannii (strain AB0057)).